Here is a 504-residue protein sequence, read N- to C-terminus: ATP synthase subunit alpha (504 aa).

169–176 (GDRQTGKT) provides a ligand contact to ATP.

This sequence belongs to the ATPase alpha/beta chains family. As to quaternary structure, F-type ATPases have 2 components, CF(1) - the catalytic core - and CF(0) - the membrane proton channel. CF(1) has five subunits: alpha(3), beta(3), gamma(1), delta(1), epsilon(1). CF(0) has three main subunits: a(1), b(2) and c(9-12). The alpha and beta chains form an alternating ring which encloses part of the gamma chain. CF(1) is attached to CF(0) by a central stalk formed by the gamma and epsilon chains, while a peripheral stalk is formed by the delta and b chains.

The protein localises to the cell membrane. The enzyme catalyses ATP + H2O + 4 H(+)(in) = ADP + phosphate + 5 H(+)(out). Produces ATP from ADP in the presence of a proton gradient across the membrane. The alpha chain is a regulatory subunit. This Clostridium botulinum (strain Alaska E43 / Type E3) protein is ATP synthase subunit alpha.